A 106-amino-acid chain; its full sequence is Flagellar transcriptional regulator FlhD (106 aa).

This sequence belongs to the FlhD family. Homodimer; disulfide-linked. Forms a heterohexamer composed of two FlhC and four FlhD subunits. Each FlhC binds a FlhD dimer, forming a heterotrimer, and a hexamer assembles by dimerization of two heterotrimers.

It is found in the cytoplasm. In terms of biological role, functions in complex with FlhC as a master transcriptional regulator that regulates transcription of several flagellar and non-flagellar operons by binding to their promoter region. Activates expression of class 2 flagellar genes, including fliA, which is a flagellum-specific sigma factor that turns on the class 3 genes. Also regulates genes whose products function in a variety of physiological pathways. The chain is Flagellar transcriptional regulator FlhD from Burkholderia mallei (strain SAVP1).